Here is a 682-residue protein sequence, read N- to C-terminus: Potassium-transporting ATPase ATP-binding subunit (682 aa).

Helical transmembrane passes span 34–54, 62–82, 219–239, and 254–274; these read PVMF…VAMA, AGFT…ANVA, IALT…TATL, and VLVA…LSAI. Asp307 acts as the 4-aspartylphosphate intermediate in catalysis. ATP contacts are provided by residues Asp344, Glu348, 377–384, and Lys395; that span reads FTAQTRMS. Mg(2+) contacts are provided by Asp518 and Asp522. A run of 3 helical transmembrane segments spans residues 588–608, 616–636, and 662–682; these read FAII…LNVM, AILS…PLAL, and LVVP…FGLV.

The protein belongs to the cation transport ATPase (P-type) (TC 3.A.3) family. Type IA subfamily. The system is composed of three essential subunits: KdpA, KdpB and KdpC.

The protein resides in the cell inner membrane. It carries out the reaction K(+)(out) + ATP + H2O = K(+)(in) + ADP + phosphate + H(+). Its function is as follows. Part of the high-affinity ATP-driven potassium transport (or Kdp) system, which catalyzes the hydrolysis of ATP coupled with the electrogenic transport of potassium into the cytoplasm. This subunit is responsible for energy coupling to the transport system and for the release of the potassium ions to the cytoplasm. The polypeptide is Potassium-transporting ATPase ATP-binding subunit (Enterobacter sp. (strain 638)).